The sequence spans 317 residues: Malate dehydrogenase (317 aa).

NAD(+)-binding positions include 13-18 (GAGNIG) and D38. Positions 87 and 93 each coordinate substrate. NAD(+) contacts are provided by residues N100 and 123–125 (VTN). 2 residues coordinate substrate: N125 and R156. The Proton acceptor role is filled by H180.

The protein belongs to the LDH/MDH superfamily. MDH type 3 family.

It carries out the reaction (S)-malate + NAD(+) = oxaloacetate + NADH + H(+). Its function is as follows. Catalyzes the reversible oxidation of malate to oxaloacetate. The chain is Malate dehydrogenase from Anaplasma marginale (strain Florida).